Here is a 227-residue protein sequence, read N- to C-terminus: MTNNLSGYRNKFVRVKTSKKRTVSSSNWLRRQLNDPYVAKARIDGFRSRAAYKLLEIHEKFKLFTPNMKIVDLGAAPGGWSQVASKLIKASDNNLNNKIISIDVLEIEHVAGVEFVQKDFFEADTEELIIQALDGRADIVMSDMASNTIGHKATDHIRTLLLCEQAFEFALKVLKPSGHFIAKIFRGGAENELLHKVKREFKTVKHFKPSSSRSESTEIYLVALNKK.

S-adenosyl-L-methionine is bound by residues Gly-78, Trp-80, Asp-103, Asp-119, and Asp-143. Lys-183 functions as the Proton acceptor in the catalytic mechanism.

Belongs to the class I-like SAM-binding methyltransferase superfamily. RNA methyltransferase RlmE family.

The protein resides in the cytoplasm. The catalysed reaction is uridine(2552) in 23S rRNA + S-adenosyl-L-methionine = 2'-O-methyluridine(2552) in 23S rRNA + S-adenosyl-L-homocysteine + H(+). Specifically methylates the uridine in position 2552 of 23S rRNA at the 2'-O position of the ribose in the fully assembled 50S ribosomal subunit. The protein is Ribosomal RNA large subunit methyltransferase E of Rickettsia conorii (strain ATCC VR-613 / Malish 7).